The chain runs to 75 residues: Large ribosomal subunit protein bL31 (75 aa).

It belongs to the bacterial ribosomal protein bL31 family. Type A subfamily. Part of the 50S ribosomal subunit.

Its function is as follows. Binds the 23S rRNA. The sequence is that of Large ribosomal subunit protein bL31 from Sphingopyxis alaskensis (strain DSM 13593 / LMG 18877 / RB2256) (Sphingomonas alaskensis).